Consider the following 167-residue polypeptide: MDITIQHPWFKRALGPFYPNRLFDQVFGEGMFDYDLFPFLSSTISPYYRQSFFRGFLDSGISEVRSDRDRVKHFSPEDLTVKILDDFVEIHGKHSERQDDHGYISREFHRRYRLPSNLNESSISCSLSADGILTFSGPKLMSSLDSSHGERPIPVSREEKPTSAPSS.

Residue M1 is modified to N-acetylmethionine. Residues 47-158 (YYRQSFFRGF…GERPIPVSRE (112 aa)) form the sHSP domain. H94, E96, H101, and H148 together coordinate Zn(2+). The interval 143 to 167 (SLDSSHGERPIPVSREEKPTSAPSS) is disordered. Residues 147 to 161 (SHGERPIPVSREEKP) are compositionally biased toward basic and acidic residues. S156 is a glycosylation site (O-linked (GlcNAc) serine).

The protein belongs to the small heat shock protein (HSP20) family. As to quaternary structure, heteropolymer composed of three CRYAA and one CRYAB subunits. Inter-subunit bridging via zinc ions enhances stability, which is crucial as there is no protein turn over in the lens. Can also form homodimers and homotetramers (dimers of dimers) which serve as the building blocks of homooligomers. Within homooligomers, the zinc-binding motif is created from residues of 3 different molecules. His-94 and Glu-96 from one molecule are ligands of the zinc ion, and His-101 and His-148 residues from additional molecules complete the site with tetrahedral coordination geometry.

The protein localises to the cytoplasm. It localises to the nucleus. In terms of biological role, contributes to the transparency and refractive index of the lens. May act as a chaperone, preventing aggregation of various proteins under a wide range of stress conditions. The polypeptide is Alpha-crystallin A chain (CRYAA) (Pelophylax lessonae (Pool frog)).